Reading from the N-terminus, the 504-residue chain is Galactan beta-1,4-galactosyltransferase GALS3 (504 aa).

A helical transmembrane segment spans residues 30-50 (LTFMALLVLCTLATLLPFIPS). The region spanning 242-456 (DYLYCGSSLY…YHGSISQRRE (215 aa)) is the GT92 domain.

The protein belongs to the glycosyltransferase 92 family. Expressed in root caps, mature leaves, top of the stems and seeds.

Its subcellular location is the golgi apparatus membrane. Functionally, involved in the biosynthesis of beta-1,4-galactan. Beta-1,4-galactans are abundant polysaccharides in plant cell walls and are found as side-chain of rhamnogalacturonan I, which is a major component of pectin. The protein is Galactan beta-1,4-galactosyltransferase GALS3 of Arabidopsis thaliana (Mouse-ear cress).